A 293-amino-acid polypeptide reads, in one-letter code: Protein YIF1A (293 aa).

A disordered region spans residues 1–27; it reads MAYHSAYGVHGSKHRTRAAPDPPPLFD. Residue A2 is modified to N-acetylalanine. The Cytoplasmic portion of the chain corresponds to 2 to 138; that stretch reads AYHSAYGVHG…PPRKDLNAPD (137 aa). S12 bears the Phosphoserine mark. Residues 139-159 form a helical membrane-spanning segment; sequence LYIPTMAFITYVLLAGMALGI. The Lumenal portion of the chain corresponds to 160–174; sequence QQRFSPEVLGLCAST. The chain crosses the membrane as a helical span at residues 175-195; that stretch reads ALVWVFMEVLALLLGLYLATV. Over 196–203 the chain is Cytoplasmic; the sequence is RSELSTFH. The helical transmembrane segment at 204 to 226 threads the bilayer; that stretch reads LLAYSGYKYVGMILSVLTGLLFG. Residues 227-229 lie on the Lumenal side of the membrane; that stretch reads SDG. A helical transmembrane segment spans residues 230-249; that stretch reads YYVALAWTSSALMYFIVRSL. Residues 250–271 lie on the Cytoplasmic side of the membrane; sequence RTAASGPDSMGGPAPRQRLQLY. A helical transmembrane segment spans residues 272 to 292; sequence LTLGAAAFQPLIIYWLTFHLV.

The protein belongs to the YIF1 family. Interacts with YIPF5.

The protein localises to the endoplasmic reticulum membrane. It is found in the golgi apparatus membrane. It localises to the endoplasmic reticulum-Golgi intermediate compartment membrane. Functionally, possible role in transport between endoplasmic reticulum and Golgi. This chain is Protein YIF1A (Yif1a), found in Mus musculus (Mouse).